A 440-amino-acid chain; its full sequence is Adenylyltransferase and sulfurtransferase UBA4 (440 aa).

An N-acetylmethionine modification is found at Met1. Residues Gly77, Asp98, 105–109, Lys122, and 166–167 each bind ATP; these read SNLHR and DS. Zn(2+) contacts are provided by Cys208 and Cys211. Cys225 acts as the Glycyl thioester intermediate; for adenylyltransferase activity in catalysis. Cys286 and Cys289 together coordinate Zn(2+). The residue at position 326 (Ser326) is a Phosphoserine. The region spanning 339-438 is the Rhodanese domain; the sequence is FLAKHIFLDV…YIDDIDQTIP (100 aa). Cys397 functions as the Cysteine persulfide intermediate; for sulfurtransferase activity in the catalytic mechanism.

It in the N-terminal section; belongs to the HesA/MoeB/ThiF family. UBA4 subfamily. Requires Zn(2+) as cofactor.

It is found in the cytoplasm. The protein resides in the cytosol. It participates in tRNA modification; 5-methoxycarbonylmethyl-2-thiouridine-tRNA biosynthesis. Functionally, plays a central role in 2-thiolation of mcm(5)S(2)U at tRNA wobble positions of cytosolic tRNA(Lys), tRNA(Glu) and tRNA(Gln). Acts by mediating the C-terminal thiocarboxylation of sulfur carrier URM1. Its N-terminus first activates URM1 as acyl-adenylate (-COAMP), then the persulfide sulfur on the catalytic cysteine is transferred to URM1 to form thiocarboxylation (-COSH) of its C-terminus. The reaction probably involves hydrogen sulfide that is generated from the persulfide intermediate and that acts as a nucleophile towards URM1. Subsequently, a transient disulfide bond is formed. Does not use thiosulfate as sulfur donor; NFS1 probably acting as a sulfur donor for thiocarboxylation reactions. Prior mcm(5) tRNA modification by the elongator complex is required for 2-thiolation. May also be involved in protein urmylation. In Saccharomyces cerevisiae (strain YJM789) (Baker's yeast), this protein is Adenylyltransferase and sulfurtransferase UBA4.